The primary structure comprises 417 residues: UDP-N-acetylmuramoylalanine--D-glutamate ligase (417 aa).

ATP is bound at residue 108–114; that stretch reads GSNGKTT.

It belongs to the MurCDEF family.

The protein resides in the cytoplasm. It carries out the reaction UDP-N-acetyl-alpha-D-muramoyl-L-alanine + D-glutamate + ATP = UDP-N-acetyl-alpha-D-muramoyl-L-alanyl-D-glutamate + ADP + phosphate + H(+). The protein operates within cell wall biogenesis; peptidoglycan biosynthesis. Its function is as follows. Cell wall formation. Catalyzes the addition of glutamate to the nucleotide precursor UDP-N-acetylmuramoyl-L-alanine (UMA). The protein is UDP-N-acetylmuramoylalanine--D-glutamate ligase of Chlamydia pneumoniae (Chlamydophila pneumoniae).